The primary structure comprises 2169 residues: Voltage-dependent L-type calcium channel subunit alpha-1C (2169 aa).

Over 1 to 153 the chain is Cytoplasmic; that stretch reads MVPLVQPTTP…RACISIVEWK (153 aa). The interval 76–97 is calmodulin-binding; sequence GAALSWQAAIDAGRQAKLMGSA. Positions 98–108 are enriched in polar residues; sequence GNTTISTVSST. Residues 98 to 127 form a disordered region; sequence GNTTISTVSSTQRKRQQYGKPKKQSGTTAT. Over residues 109-120 the composition is skewed to basic residues; the sequence is QRKRQQYGKPKK. One copy of the I repeat lies at 140–437; the sequence is NPIRRACISI…LVLGVLSGEF (298 aa). A helical transmembrane segment spans residues 154–172; it reads PFEIIILLTIFANCVALAI. At 173–187 the chain is on the extracellular side; that stretch reads YIPFPEDDSNATNSN. Asparagine 182 is a glycosylation site (N-linked (GlcNAc...) asparagine). A helical transmembrane segment spans residues 188-208; that stretch reads LERVEYLFLIIFTVEAFLKVI. The Cytoplasmic segment spans residues 209-217; the sequence is AYGLLFHPN. Residues 218-238 traverse the membrane as a helical segment; it reads AYLRNGWNLLDFIIVVVGLFS. Residues 239-261 lie on the Extracellular side of the membrane; the sequence is AILEQATKADGANALGGKGAGFD. Residues 262-280 form a helical membrane-spanning segment; it reads VKALRAFRVLRPLRLVSGV. Residues 281–297 lie on the Cytoplasmic side of the membrane; sequence PSLQVVLNSIIKAMVPL. A helical membrane pass occupies residues 298–319; that stretch reads LHTALLVLFVIIIYAIIGLELF. The Extracellular segment spans residues 320-379; that stretch reads MGKMHKTCYNQEGITDVPAEEDPSPCALESGHGRQCQNGTVCKPGWDGPKHGITNFDNFA. Cysteine 345 and cysteine 361 form a disulfide bridge. N-linked (GlcNAc...) asparagine glycosylation is present at asparagine 357. Positions 380–401 form an intramembrane region, pore-forming; that stretch reads FAMLTVFQCITMEGWTDVLYWM. A Selectivity filter of repeat I motif is present at residues 390–393; it reads TMEG. Glutamate 392 is a binding site for Ca(2+). At 402 to 409 the chain is on the extracellular side; it reads QDAMGYEL. The helical transmembrane segment at 410–430 threads the bilayer; that stretch reads PWVYFVSLVIFGSFFVLNLVL. Topologically, residues 431-553 are cytoplasmic; the sequence is GVLSGEFSKE…RKCRAAVKSN (123 aa). Residues 457–474 are AID/alpha-interaction domain; mediates interaction with the beta subunit; sequence QQLEEDLKGYLDWITQAE. The disordered stretch occupies residues 478-510; the sequence is PENEDEGVDEEKPRNMSMPTSETESVNTENVAG. The segment covering 494–507 has biased composition (polar residues); the sequence is SMPTSETESVNTEN. A Phosphoserine modification is found at serine 498. Residue threonine 505 is modified to Phosphothreonine. The stretch at 539–785 is one II repeat; the sequence is NRFCRRKCRA…VFLAIAVDNL (247 aa). Residues 554-572 form a helical membrane-spanning segment; it reads VFYWLVIFLVFLNTLTIAS. At 573 to 583 the chain is on the extracellular side; it reads EHYNQPHWLTE. Residues 584-604 traverse the membrane as a helical segment; it reads VQDTANKALLALFTAEMLLKM. Over 605–615 the chain is Cytoplasmic; the sequence is YSLGLQAYFVS. A helical transmembrane segment spans residues 616-635; it reads LFNRLDCFIVCGGILETILV. Residues 636–644 are Extracellular-facing; that stretch reads ETKIMSPLG. Residues 645–663 form a helical membrane-spanning segment; sequence ISVLRCVRLLRIFKITRYW. At 664–682 the chain is on the cytoplasmic side; it reads NSLSNLVASLLNSVRSIAS. The helical transmembrane segment at 683–702 threads the bilayer; that stretch reads LLLLLFLFIIIFSLLGMQLF. Topologically, residues 703–722 are extracellular; sequence GGKFNFDEMRTRRSTFDNFP. Positions 723-744 form an intramembrane region, pore-forming; it reads QSLLTVFQILTGEDWNSVMYDG. The Selectivity filter of repeat II motif lies at 733–736; it reads TGED. Position 735 (glutamate 735) interacts with Ca(2+). Over 745 to 754 the chain is Extracellular; the sequence is IMAYGGPSFP. The chain crosses the membrane as a helical span at residues 755 to 774; sequence GMLVCIYFIILFICGNYILL. At 775-929 the chain is on the cytoplasmic side; it reads NVFLAIAVDN…LQCHRIVNDT (155 aa). Positions 793–890 are disordered; it reads SAQKEEEEEK…EMPVGPRPRP (98 aa). The span at 812-835 shows a compositional bias: basic and acidic residues; that stretch reads SPEKKQEVVEKPAVEETKEEKIEL. 2 positions are modified to phosphoserine: serine 837 and serine 844. Residues 858–905 form an interaction with STAC2 region; it reads NENEDKSPYPNPDAAGEEDEEEPEMPVGPRPRPLSELHLKEKAVPMPE. Residues 872-881 are compositionally biased toward acidic residues; it reads AGEEDEEEPE. Residues 916 to 1198 form an III repeat; it reads NRFRLQCHRI…IFVGFVIVTF (283 aa). The chain crosses the membrane as a helical span at residues 930–948; it reads IFTNLILFFILLSSISLAA. Residues 949–960 lie on the Extracellular side of the membrane; that stretch reads EDPVQHTSFRNH. Residues 961-980 form a helical membrane-spanning segment; it reads ILFYFDIVFTTIFTIEIALK. Over 981 to 996 the chain is Cytoplasmic; it reads MTAYGAFLHKGSFCRN. Residues 997–1015 traverse the membrane as a helical segment; that stretch reads YFNILDLLVVSVSLISFGI. The Extracellular portion of the chain corresponds to 1016–1022; it reads QSSAINV. A helical transmembrane segment spans residues 1023–1041; the sequence is VKILRVLRVLRPLRAINRA. Residues 1042–1060 lie on the Cytoplasmic side of the membrane; the sequence is KGLKHVVQCVFVAIRTIGN. The helical transmembrane segment at 1061–1080 threads the bilayer; it reads IVIVTTLLQFMFACIGVQLF. Over 1081–1130 the chain is Extracellular; that stretch reads KGKLYTCSDSSKQTEAECKGNYITYKDGEVDQPIIQPRSWENSKFDFDNV. Cysteine 1087 and cysteine 1098 form a disulfide bridge. A dihydropyridine binding region spans residues 1118–1207; that stretch reads RSWENSKFDF…FQEQGEQEYK (90 aa). An intramembrane region (pore-forming) is located at residues 1131–1151; sequence LAAMMALFTVSTFEGWPELLY. The Selectivity filter of repeat III signature appears at 1142 to 1145; the sequence is TFEG. Glutamate 1144 provides a ligand contact to Ca(2+). Topologically, residues 1152-1168 are extracellular; it reads RSIDSHTEDKGPIYNYR. A helical membrane pass occupies residues 1169–1190; that stretch reads VEISIFFIIYIIIIAFFMMNIF. The Cytoplasmic segment spans residues 1191-1248; that stretch reads VGFVIVTFQEQGEQEYKNCELDKNQRQCVEYALKARPLRRYIPKNQHQYKVWYVVNST. Residues 1235–1508 form an IV repeat; the sequence is NQHQYKVWYV…LFVAVVMDNF (274 aa). Residues 1249-1270 form a helical membrane-spanning segment; sequence YFEYLMFVLILLNTICLAMQHY. Over 1271–1278 the chain is Extracellular; that stretch reads GQSCLFKI. Residues 1279-1300 form a helical membrane-spanning segment; the sequence is AMNILNMLFTGLFTVEMILKLI. Over 1301 to 1310 the chain is Cytoplasmic; it reads AFKPKHYFCD. The helical transmembrane segment at 1311–1330 threads the bilayer; it reads AWNTFDALIVVGSIVDIAIT. The Extracellular segment spans residues 1331-1353; the sequence is EVNPAEHTQCSPSMNAEENSRIS. Residues 1354–1372 traverse the membrane as a helical segment; the sequence is ITFFRLFRVMRLVKLLSRG. The Cytoplasmic portion of the chain corresponds to 1373-1390; the sequence is EGIRTLLWTFIKSFQALP. The chain crosses the membrane as a helical span at residues 1391–1411; it reads YVALLIVMLFFIYAVIGMQVF. Residues 1412 to 1433 are Extracellular-facing; the sequence is GKIALNDTTEINRNNNFQTFPQ. Asparagine 1417 carries N-linked (GlcNAc...) asparagine glycosylation. An intramembrane region (pore-forming) is located at residues 1434 to 1452; sequence AVLLLFRCATGEAWQDIML. Residues 1443–1446 carry the Selectivity filter of repeat IV motif; the sequence is TGEA. Residues 1453–1480 are Extracellular-facing; it reads ACMPGKKCAPESDPSNSTEGETPCGSSF. The dihydropyridine binding stretch occupies residues 1459–1527; the sequence is KCAPESDPSN…LGPHHLDEFK (69 aa). Cysteines 1460 and 1476 form a disulfide. N-linked (GlcNAc...) asparagine glycosylation occurs at asparagine 1468. The segment at 1473–1515 is phenylalkylamine binding; the sequence is ETPCGSSFAVFYFISFYMLCAFLIINLFVAVVMDNFDYLTRDW. A helical transmembrane segment spans residues 1481-1505; sequence AVFYFISFYMLCAFLIINLFVAVVM. Over 1506 to 2169 the chain is Cytoplasmic; that stretch reads DNFDYLTRDW…ADSRVHVRSL (664 aa). The important for interaction with STAC1, STAC2 and STAC3 stretch occupies residues 1640 to 1667; it reads DEVTVGKFYATFLIQEYFRKFKKRKEQG. The segment at 1646 to 1666 is calmodulin-binding IQ region; that stretch reads KFYATFLIQEYFRKFKKRKEQ. The segment at 1680–1699 is important for localization in at the junctional membrane; sequence LQAGLRTLHDIGPEIRRAIS. Phosphoserine occurs at positions 1699 and 1720. 2 disordered regions span residues 1761 to 1793 and 1894 to 1920; these read KAGN…TGSN and ENRQ…LRSA. Residues 1780 to 1792 show a composition bias toward polar residues; sequence STFTPSSYSSTGS. Basic and acidic residues predominate over residues 1894-1910; sequence ENRQLTPPEEDKGDTRP. Serine 1927 is subject to Phosphoserine.

This sequence belongs to the calcium channel alpha-1 subunit (TC 1.A.1.11) family. CACNA1C subfamily. As to quaternary structure, component of a calcium channel complex consisting of a pore-forming alpha subunit (CACNA1C) and ancillary beta, gamma and delta subunits. The channel complex contains alpha, beta, gamma and delta subunits in a 1:1:1:1 ratio, i.e. it contains only one of each type of subunit. CACNA1C channel activity is modulated by ancillary subunits, such as CACNB1, CACNB2, CACNB3, CACNA2D1 and CACNA2D4. Interacts with CACNB1. Interacts with CACNB2. Identified in a complex with CACNA2D4 and CACNB3. Interacts with CACNB3. Interacts with CACNA2D1. Interacts with CACNA2D4. Interacts with the gamma subunits CACNG4, CACNG6, CACNG7 and CACNG8. Interacts with CALM1. Interacts (via the N-terminus and the C-terminal C and IQ motifs) with CABP1; this inhibits Ca(2+)-dependent channel inactivation. The binding via the C motif is calcium independent whereas the binding via IQ requires the presence of calcium and is mutually exclusive with calmodulin binding. The binding to the cytoplasmic N-terminal domain is calcium independent but is essential for the channel modulation. Interacts (via C-terminal CDB motif) with CABP5; in a calcium-dependent manner. Interacts with CIB1; the interaction increases upon cardiomyocytes hypertrophy. Interacts with STAC2 and STAC3; this inhibits channel inactivation. Phosphorylation by PKA at Ser-1927 activates the channel. Elevated levels of blood glucose lead to increased phosphorylation by PKA. Expressed in heart. Expressed in uterus.

Its subcellular location is the cell membrane. It is found in the sarcolemma. The protein resides in the perikaryon. It localises to the postsynaptic density membrane. The protein localises to the cell projection. Its subcellular location is the dendrite. It is found in the T-tubule. It carries out the reaction Ca(2+)(in) = Ca(2+)(out). With respect to regulation, inhibited by dihydropyridines (DHP), such as isradipine. Inhibited by nifedipine. Channel activity is regulated by Ca(2+) and calmodulin. Binding of STAC1, STAC2 or STAC3 to a region that overlaps with the calmodulin binding site inhibits channel inactivation by Ca(2+) and calmodulin. Binding of calmodulin or CABP1 at the same regulatory sites results in opposite effects on the channel function. Shear stress and pressure increases calcium channel activity. In terms of biological role, pore-forming, alpha-1C subunit of the voltage-gated calcium channel that gives rise to L-type calcium currents. Mediates influx of calcium ions into the cytoplasm, and thereby triggers calcium release from the sarcoplasm. Plays an important role in excitation-contraction coupling in the heart. Required for normal heart development and normal regulation of heart rhythm. Required for normal contraction of smooth muscle cells in blood vessels and in the intestine. Essential for normal blood pressure regulation via its role in the contraction of arterial smooth muscle cells. Long-lasting (L-type) calcium channels belong to the 'high-voltage activated' (HVA) group. The sequence is that of Voltage-dependent L-type calcium channel subunit alpha-1C (CACNA1C) from Cavia porcellus (Guinea pig).